We begin with the raw amino-acid sequence, 445 residues long: 8-amino-7-oxononanoate synthase (445 aa).

Substrate is bound at residue Arg-40. 131-132 (GY) provides a ligand contact to pyridoxal 5'-phosphate. A substrate-binding site is contributed by His-156. Pyridoxal 5'-phosphate contacts are provided by Ser-202, His-230, and Thr-258. Lys-261 carries the post-translational modification N6-(pyridoxal phosphate)lysine. Substrate is bound at residue Thr-377. A disordered region spans residues 408–445 (ASEGQTRRDAEQPPRSLRSLPPEGAAASLGAARRETAA).

The protein belongs to the class-II pyridoxal-phosphate-dependent aminotransferase family. BioF subfamily. Homodimer. The cofactor is pyridoxal 5'-phosphate.

It catalyses the reaction 6-carboxyhexanoyl-[ACP] + L-alanine + H(+) = (8S)-8-amino-7-oxononanoate + holo-[ACP] + CO2. It participates in cofactor biosynthesis; biotin biosynthesis. Functionally, catalyzes the decarboxylative condensation of pimeloyl-[acyl-carrier protein] and L-alanine to produce 8-amino-7-oxononanoate (AON), [acyl-carrier protein], and carbon dioxide. The protein is 8-amino-7-oxononanoate synthase of Burkholderia ambifaria (strain MC40-6).